The primary structure comprises 359 residues: Membrane-bound lytic murein transglycosylase C (359 aa).

An N-terminal signal peptide occupies residues 1 to 16; sequence MKKYLALALIAPLLIS. The N-palmitoyl cysteine moiety is linked to residue cysteine 17. Cysteine 17 carries S-diacylglycerol cysteine lipidation.

The protein belongs to the transglycosylase Slt family.

It localises to the cell outer membrane. It carries out the reaction Exolytic cleavage of the (1-&gt;4)-beta-glycosidic linkage between N-acetylmuramic acid (MurNAc) and N-acetylglucosamine (GlcNAc) residues in peptidoglycan, from either the reducing or the non-reducing ends of the peptidoglycan chains, with concomitant formation of a 1,6-anhydrobond in the MurNAc residue.. Functionally, murein-degrading enzyme. May play a role in recycling of muropeptides during cell elongation and/or cell division. This Escherichia coli O127:H6 (strain E2348/69 / EPEC) protein is Membrane-bound lytic murein transglycosylase C.